A 710-amino-acid polypeptide reads, in one-letter code: PWWP domain-containing DNA repair factor 3A (710 aa).

The disordered stretch occupies residues 106–160; that stretch reads QESSAGTGRADRSLRGKPMEHVSSPCDSNSSSLPRGDVLGSSRPHRRRPCVQQSL. Residues 114–125 are compositionally biased toward basic and acidic residues; sequence RADRSLRGKPME. Low complexity predominate over residues 128-137; that stretch reads SSPCDSNSSS. Position 161 is a phosphoserine (Ser161). Disordered regions lie at residues 177–204 and 230–398; these read KKGL…ESGS and NGSS…EEPP. Residues 288-297 show a composition bias toward low complexity; the sequence is PSACSEPGEC. Ser374 and Ser375 each carry phosphoserine. Positions 375–385 are enriched in polar residues; sequence SEESMGSNSMR. A PWWP domain is found at 411-472; the sequence is VGMLVWHKHK…KHFDCKEKQT (62 aa).

This sequence belongs to the PWWP3A family. Interacts with TP53BP1 (via BRCT domain); the interaction is not dependent on its phosphorylation status. Binds nucleosomes. Interacts with trimethylated 'Lys-36' of histone H3 (H3K36me3) (in vitro).

Its subcellular location is the nucleus. Involved in the DNA damage response pathway by contributing to the maintenance of chromatin architecture. Recruited to the vicinity of DNA breaks by TP53BP1 and plays an accessory role to facilitate damage-induced chromatin changes and promoting chromatin relaxation. Required for efficient DNA repair and cell survival following DNA damage. The chain is PWWP domain-containing DNA repair factor 3A from Homo sapiens (Human).